A 308-amino-acid chain; its full sequence is Protoheme IX farnesyltransferase (308 aa).

Transmembrane regions (helical) follow at residues 31–51 (VGIV…AFYF), 60–80 (LDIV…SCVI), 110–130 (ALWF…MTNL), 131–151 (TAAG…TMWS), 157–177 (VNTI…WTAV), 185–205 (AWVL…ALAI), 232–252 (IIIW…LGLP), 253–273 (IVIL…VGYR), and 285–305 (FVYS…FTLF).

The protein belongs to the UbiA prenyltransferase family. Protoheme IX farnesyltransferase subfamily. As to quaternary structure, interacts with CtaA.

The protein localises to the cell membrane. It carries out the reaction heme b + (2E,6E)-farnesyl diphosphate + H2O = Fe(II)-heme o + diphosphate. It functions in the pathway porphyrin-containing compound metabolism; heme O biosynthesis; heme O from protoheme: step 1/1. Converts heme B (protoheme IX) to heme O by substitution of the vinyl group on carbon 2 of heme B porphyrin ring with a hydroxyethyl farnesyl side group. In Bacillus licheniformis (strain ATCC 14580 / DSM 13 / JCM 2505 / CCUG 7422 / NBRC 12200 / NCIMB 9375 / NCTC 10341 / NRRL NRS-1264 / Gibson 46), this protein is Protoheme IX farnesyltransferase.